Consider the following 219-residue polypeptide: UPF0502 protein Gmet_0262 (219 aa).

This sequence belongs to the UPF0502 family.

The sequence is that of UPF0502 protein Gmet_0262 from Geobacter metallireducens (strain ATCC 53774 / DSM 7210 / GS-15).